Here is a 229-residue protein sequence, read N- to C-terminus: 5'-methylthioadenosine/S-adenosylhomocysteine nucleosidase (229 aa).

The Proton acceptor role is filled by E12. Substrate-binding positions include G78, I152, and 173–174; that span reads ME. The active-site Proton donor is the D197.

This sequence belongs to the PNP/UDP phosphorylase family. MtnN subfamily.

The catalysed reaction is S-adenosyl-L-homocysteine + H2O = S-(5-deoxy-D-ribos-5-yl)-L-homocysteine + adenine. It carries out the reaction S-methyl-5'-thioadenosine + H2O = 5-(methylsulfanyl)-D-ribose + adenine. The enzyme catalyses 5'-deoxyadenosine + H2O = 5-deoxy-D-ribose + adenine. Its pathway is amino-acid biosynthesis; L-methionine biosynthesis via salvage pathway; S-methyl-5-thio-alpha-D-ribose 1-phosphate from S-methyl-5'-thioadenosine (hydrolase route): step 1/2. Its function is as follows. Catalyzes the irreversible cleavage of the glycosidic bond in both 5'-methylthioadenosine (MTA) and S-adenosylhomocysteine (SAH/AdoHcy) to adenine and the corresponding thioribose, 5'-methylthioribose and S-ribosylhomocysteine, respectively. Also cleaves 5'-deoxyadenosine, a toxic by-product of radical S-adenosylmethionine (SAM) enzymes, into 5-deoxyribose and adenine. This chain is 5'-methylthioadenosine/S-adenosylhomocysteine nucleosidase, found in Baumannia cicadellinicola subsp. Homalodisca coagulata.